The following is a 345-amino-acid chain: S-adenosylmethionine:tRNA ribosyltransferase-isomerase (345 aa).

This sequence belongs to the QueA family. Monomer.

It localises to the cytoplasm. The enzyme catalyses 7-aminomethyl-7-carbaguanosine(34) in tRNA + S-adenosyl-L-methionine = epoxyqueuosine(34) in tRNA + adenine + L-methionine + 2 H(+). The protein operates within tRNA modification; tRNA-queuosine biosynthesis. Its function is as follows. Transfers and isomerizes the ribose moiety from AdoMet to the 7-aminomethyl group of 7-deazaguanine (preQ1-tRNA) to give epoxyqueuosine (oQ-tRNA). The protein is S-adenosylmethionine:tRNA ribosyltransferase-isomerase of Azoarcus sp. (strain BH72).